Reading from the N-terminus, the 103-residue chain is MYAVIVTGGKQYKVAPGEYLKIEKLEIATGESVTFDRVLLVGNGDDVNIGAPVVAGATVVAEVISQGRHDKVRIIKFRRRKHHMKRMGHRQWYTEIKITGIQA.

The protein belongs to the bacterial ribosomal protein bL21 family. In terms of assembly, part of the 50S ribosomal subunit. Contacts protein L20.

This protein binds to 23S rRNA in the presence of protein L20. The polypeptide is Large ribosomal subunit protein bL21 (Pseudomonas syringae pv. tomato (strain ATCC BAA-871 / DC3000)).